Here is a 116-residue protein sequence, read N- to C-terminus: Large ribosomal subunit protein bL19c (116 aa).

Belongs to the bacterial ribosomal protein bL19 family.

The protein localises to the plastid. Its subcellular location is the chloroplast. The protein is Large ribosomal subunit protein bL19c of Cyanidium caldarium (Red alga).